The primary structure comprises 402 residues: MYDSEVIEYAKEQENIISKLEYRVYKHDDGRSVNRQDLMRDYARVLYSSSFRRLQGKMQLLGVDASKFNRNRLTHSLEVAQIARSIAYDLELNHTVVAETASLAHDIGNPPFGHYGEVVLNDLSLACGGYEGNAQAFRILRTLEKKHYAYPGLNLNVRTLMAITKYFFNKHQNNKKFLYDADYEFLKTELDSKGVTVTKSIDAEIMDLADEIAYAAHDLEDALSFGMISLGEIVHEFSISDKFKDAYPTMTDIAKEAQNVAMKASRSGTSEEYAIVLKKELTSMIVNILCSDIGLVDGCLGYKRHAKLAEGLKKLLFKAILRKKDIQLYERRGEQIIRGLFEVYSDEKYNKDNMLLPPELRAINDCKTRLVTDYISGMMDSYAAQEYEKYFGKGSADKLYFK.

The region spanning 72–215 (RLTHSLEVAQ…MDLADEIAYA (144 aa)) is the HD domain.

It belongs to the dGTPase family. Type 2 subfamily.

This Vibrio cholerae serotype O1 (strain ATCC 39315 / El Tor Inaba N16961) protein is Deoxyguanosinetriphosphate triphosphohydrolase-like protein 2.